The sequence spans 720 residues: MFTPEREKELQEKTRELLRKIKDVKVLSFEEAKKLAEDLREVIRYHDYKYYVEANPVIPDYDYDRLFRALKEIEKKYPELITPDSPTQRVASEISGEFPTVKHYTPMLSLDNAYSEDELREFDRRVRQITGLEVVEYAVEPKLDGAGIALVYENDLFVRGATRGDGEYGEDITNNLKTIKTIPLKAEFSRFGIKLAEIRGEVVIRKDEFQKLNKERMEEGLPPFANPRNAAAGSIRQKDPKEVAKRNLEAIVYHLSYVEPPETEPPTHYESLKMLHTLGFKTLFKDTKVCKGIDEVIEYCKEWEKKRDSYPYEIDGMVVKVNDRRLWKVLGYTSHHPRWAIAYKFKPRRAVTKLVDVVFQVGRTGTITPVGKLEPVELGGVTVSSVSLFNEDFIREKDIRIGDWVVVERAGDVIPYVVEVLKEKRTGEEKPVEFPKYCPSCGSELVKLPEEVAIRCINISCPAQSVLRIKHWASRDAMDIRGLGDATIKLLFNRGLAKDVGDLYYLKLTDILKLPGFGEKSAMNLLKAIEESKNRPLDRVLYGLGIRYVGQTTAKKIAEIINSVWDLKDIPLEKLMRLEGIGYKVARSIKEFFNIPQNLEVLKKLEKAGVNLAKKVKEKVADVLKGKTFVFTGTLDCCSREKAGEIVEMLGGKFSNSVTSKTDYLVVGKDPGATKLSKAKKYGVKTITEEEFVNMIKDYVDLEKIKKEDKKEKPKIGRLF.

Residues 60–64 (DYDYD), 109–110 (SL), and Glu140 contribute to the NAD(+) site. Lys142 serves as the catalytic N6-AMP-lysine intermediate. NAD(+)-binding residues include Arg163 and Glu201. The tract at residues 220 to 239 (GLPPFANPRNAAAGSIRQKD) is disordered. Residues Lys320 and Lys344 each coordinate NAD(+). Zn(2+) is bound by residues Cys438, Cys441, Cys456, and Cys461. A BRCT domain is found at 619-709 (KVADVLKGKT…VDLEKIKKED (91 aa)).

It belongs to the NAD-dependent DNA ligase family. LigA subfamily. The cofactor is Mn(2+). It depends on Mg(2+) as a cofactor.

The enzyme catalyses NAD(+) + (deoxyribonucleotide)n-3'-hydroxyl + 5'-phospho-(deoxyribonucleotide)m = (deoxyribonucleotide)n+m + AMP + beta-nicotinamide D-nucleotide.. In terms of biological role, DNA ligase that catalyzes the formation of phosphodiester linkages between 5'-phosphoryl and 3'-hydroxyl groups in double-stranded DNA using NAD as a coenzyme and as the energy source for the reaction. It is essential for DNA replication and repair of damaged DNA. This chain is DNA ligase, found in Aquifex aeolicus (strain VF5).